A 440-amino-acid chain; its full sequence is ATP-dependent protease ATPase subunit HslU (440 aa).

Residues Val-18, 60-65 (GVGKTE), Asp-253, Glu-318, and Arg-390 contribute to the ATP site.

It belongs to the ClpX chaperone family. HslU subfamily. As to quaternary structure, a double ring-shaped homohexamer of HslV is capped on each side by a ring-shaped HslU homohexamer. The assembly of the HslU/HslV complex is dependent on binding of ATP.

The protein resides in the cytoplasm. Its function is as follows. ATPase subunit of a proteasome-like degradation complex; this subunit has chaperone activity. The binding of ATP and its subsequent hydrolysis by HslU are essential for unfolding of protein substrates subsequently hydrolyzed by HslV. HslU recognizes the N-terminal part of its protein substrates and unfolds these before they are guided to HslV for hydrolysis. The protein is ATP-dependent protease ATPase subunit HslU of Methylococcus capsulatus (strain ATCC 33009 / NCIMB 11132 / Bath).